The primary structure comprises 142 residues: Hemoglobin subunit alpha (142 aa).

The 141-residue stretch at V2 to R142 folds into the Globin domain. S4 is subject to Phosphoserine. The residue at position 8 (K8) is an N6-succinyllysine. Phosphothreonine is present on T9. Residue K12 is modified to N6-succinyllysine. K17 carries the N6-acetyllysine; alternate modification. Residue K17 is modified to N6-succinyllysine; alternate. At Y25 the chain carries Phosphotyrosine. At S36 the chain carries Phosphoserine. Residue K41 is modified to N6-succinyllysine. At S50 the chain carries Phosphoserine. An O2-binding site is contributed by Q59. H88 lines the heme b pocket. T109 bears the Phosphothreonine mark. S125 bears the Phosphoserine mark. Phosphothreonine is present on residues T135 and T138. A Phosphoserine modification is found at S139.

It belongs to the globin family. As to quaternary structure, heterotetramer of two alpha chains and two beta chains. Red blood cells.

Involved in oxygen transport from the lung to the various peripheral tissues. Functionally, hemopressin acts as an antagonist peptide of the cannabinoid receptor CNR1. Hemopressin-binding efficiently blocks cannabinoid receptor CNR1 and subsequent signaling. The protein is Hemoglobin subunit alpha (HBA) of Monodelphis domestica (Gray short-tailed opossum).